A 206-amino-acid polypeptide reads, in one-letter code: Small ribosomal subunit protein uS3 (206 aa).

A KH type-2 domain is found at isoleucine 39–lysine 107.

Belongs to the universal ribosomal protein uS3 family. In terms of assembly, part of the 30S ribosomal subunit. Forms a tight complex with proteins S10 and S14.

Its function is as follows. Binds the lower part of the 30S subunit head. Binds mRNA in the 70S ribosome, positioning it for translation. This Wolbachia sp. subsp. Brugia malayi (strain TRS) protein is Small ribosomal subunit protein uS3.